Here is a 289-residue protein sequence, read N- to C-terminus: Probable aquaporin PIP2-6 (289 aa).

At methionine 1 the chain carries N-acetylmethionine. The Cytoplasmic portion of the chain corresponds to 1–38; the sequence is MTKDELTEEESLSGKDYLDPPPVKTFEVRELKKWSFYR. Threonine 7 is modified (phosphothreonine). The residue at position 11 (serine 11) is a Phosphoserine. The helical transmembrane segment at 39 to 59 threads the bilayer; that stretch reads AVIAEFIATLLFLYVTVLTVI. Over 60-80 the chain is Extracellular; it reads GFKSQTDINAGGGACASVGLL. A helical membrane pass occupies residues 81-101; the sequence is GISWAFGGMIFILVYCTAGIS. The Cytoplasmic segment spans residues 102–124; that stretch reads GGHINPAVTFGLFLASKVSLVRA. The NPA 1 motif lies at 106 to 108; it reads NPA. The chain crosses the membrane as a helical span at residues 125–145; that stretch reads VSYMVAQCLGATCGVGLVKVF. At 146–165 the chain is on the extracellular side; the sequence is QSTYYNRYGGGANMLSDGYN. A helical transmembrane segment spans residues 166 to 186; it reads VGVGVGAEIIGTFVLVYTVFS. Residues 187 to 200 lie on the Cytoplasmic side of the membrane; it reads ATDPKRNARDSHIP. A helical transmembrane segment spans residues 201-221; it reads VLAPLPIGFSVFMVHLATIPI. At 222 to 248 the chain is on the extracellular side; sequence TGTGINPARSFGAAVIYNNQKAWDDQW. An NPA 2 motif is present at residues 227–229; sequence NPA. A helical membrane pass occupies residues 249 to 269; sequence IFWVGPFVGAAIAAFYHQFVL. Residues 270–289 lie on the Cytoplasmic side of the membrane; sequence RAGAMKAYGSVRSQLHELHA. 2 positions are modified to phosphoserine: serine 279 and serine 282.

It belongs to the MIP/aquaporin (TC 1.A.8) family. PIP (TC 1.A.8.11) subfamily. In terms of tissue distribution, expressed above ground, and in flower buds.

It is found in the cell membrane. In terms of biological role, aquaporins facilitate the transport of water and small neutral solutes across cell membranes. The protein is Probable aquaporin PIP2-6 (PIP2-6) of Arabidopsis thaliana (Mouse-ear cress).